The sequence spans 363 residues: Protein disulfide-isomerase 1 (363 aa).

Residues Met-1–Ala-20 form the signal peptide. 2 consecutive Thioredoxin domains span residues Glu-21–Lys-132 and Thr-133–Glu-285. Residues Cys-51, Cys-54, Cys-172, and Cys-175 each act as nucleophile in the active site. Cystine bridges form between Cys-51–Cys-54 and Cys-172–Cys-175.

The protein belongs to the protein disulfide isomerase family.

The protein resides in the endoplasmic reticulum lumen. It carries out the reaction Catalyzes the rearrangement of -S-S- bonds in proteins.. Functionally, participates in the folding of proteins containing disulfide bonds, may be involved in glycosylation, prolyl hydroxylation and triglyceride transfer. In Dictyostelium discoideum (Social amoeba), this protein is Protein disulfide-isomerase 1 (pdi1).